Consider the following 898-residue polypeptide: Endoplasmic reticulum metallopeptidase 1 (898 aa).

Methionine 1 carries the N-acetylmethionine modification. Residues 1 to 59 (MEWSSESAAVRRHRGTAERREGQAAASHPQREASAQEDARGGGRMRGRTESGGESRGAK) are disordered. Topologically, residues 1–66 (MEWSSESAAV…GAKTALSEAR (66 aa)) are cytoplasmic. Positions 37–57 (EDARGGGRMRGRTESGGESRG) are enriched in basic and acidic residues. Residues 67 to 87 (TALALALYLLALRALVQLSLQ) traverse the membrane as a helical segment. The Lumenal segment spans residues 88–393 (RLVLSRTSGL…SSSEYRHGSM (306 aa)). Asparagine 176 is a glycosylation site (N-linked (GlcNAc...) asparagine). Residues cysteine 198 and cysteine 216 are joined by a disulfide bond. The Zn(2+) site is built by histidine 199 and aspartate 211. Glutamate 245 acts as the Proton acceptor in catalysis. Positions 246, 272, and 348 each coordinate Zn(2+). The chain crosses the membrane as a helical span at residues 394–414 (VFFDVLGLLVIAYPSRVGSII). Residues 415–451 (NYMVVMAVVLYLGRKLLRPNHSNSNYVRDFLCGLGIT) are Cytoplasmic-facing. The chain crosses the membrane as a helical span at residues 452–472 (FISWFTSLVTVLIIAVFVSLI). At 473 to 480 (GQSLSWYN) the chain is on the lumenal side. Residues 481 to 501 (YFYIAVCLYGTATVAKIILIH) form a helical membrane-spanning segment. Residues 502 to 515 (TLAKRFYYVNASDL) lie on the Cytoplasmic side of the membrane. The helical transmembrane segment at 516-538 (YLGELFFDTSLFVHCGFLVALTA) threads the bilayer. Residues 539 to 542 (QGFC) lie on the Lumenal side of the membrane. Residues 543-562 (SAFMSAVWVAFPLLTKLCVY) traverse the membrane as a helical segment. At 563 to 573 (KDFKKHGAKGR) the chain is on the cytoplasmic side. Residues 574-594 (FIALYLLGMFIPYLYGLYLIW) form a helical membrane-spanning segment. Residues 595-615 (AVFEMFTPILGRSGSEIPPDV) are Lumenal-facing. A helical membrane pass occupies residues 616–636 (VLASILAVCVMILSSYFITFI). Over 637 to 645 (YLVNSTKKT) the chain is Cytoplasmic. The helical transmembrane segment at 646–666 (ILTLILVCAVTFLLVCSGAFF) threads the bilayer. Residues 667 to 898 (PYSSNPDSPK…WVSTYSLFVF (232 aa)) are Lumenal-facing. A glycan (N-linked (GlcNAc...) asparagine) is linked at asparagine 724.

It belongs to the peptidase M28 family. Zn(2+) is required as a cofactor. As to expression, widely expressed, with highest levels in ovary, kidney, hypothalamus and hippocampus. Within the ovarian follicle, expressed in granulosa cells, but not in oocytes. Present in both preantral and antral follicles, but not in atretic antral follicle.

Its subcellular location is the endoplasmic reticulum membrane. Its function is as follows. Within the ovary, required for the organization of somatic cells and oocytes into discrete follicular structures. In Rattus norvegicus (Rat), this protein is Endoplasmic reticulum metallopeptidase 1.